Consider the following 259-residue polypeptide: Isoprenyl transferase (259 aa).

Aspartate 30 is an active-site residue. Aspartate 30 provides a ligand contact to Mg(2+). Substrate-binding positions include 31-34, tryptophan 35, arginine 43, histidine 47, and 75-77; these read GNGR and STE. Asparagine 78 acts as the Proton acceptor in catalysis. Residues tryptophan 79, arginine 81, arginine 198, and 204 to 206 each bind substrate; that span reads RIS. Glutamate 217 contributes to the Mg(2+) binding site.

This sequence belongs to the UPP synthase family. Homodimer. Requires Mg(2+) as cofactor.

Functionally, catalyzes the condensation of isopentenyl diphosphate (IPP) with allylic pyrophosphates generating different type of terpenoids. The protein is Isoprenyl transferase of Caulobacter vibrioides (strain ATCC 19089 / CIP 103742 / CB 15) (Caulobacter crescentus).